We begin with the raw amino-acid sequence, 294 residues long: Ribosomal protein L11 methyltransferase (294 aa).

Residues Thr146, Gly167, Asp189, and Asn231 each contribute to the S-adenosyl-L-methionine site.

This sequence belongs to the methyltransferase superfamily. PrmA family.

It localises to the cytoplasm. The enzyme catalyses L-lysyl-[protein] + 3 S-adenosyl-L-methionine = N(6),N(6),N(6)-trimethyl-L-lysyl-[protein] + 3 S-adenosyl-L-homocysteine + 3 H(+). Its function is as follows. Methylates ribosomal protein L11. This is Ribosomal protein L11 methyltransferase from Aliivibrio fischeri (strain ATCC 700601 / ES114) (Vibrio fischeri).